The following is a 572-amino-acid chain: Proline--tRNA ligase (572 aa).

The protein belongs to the class-II aminoacyl-tRNA synthetase family. ProS type 1 subfamily. Homodimer.

It localises to the cytoplasm. It catalyses the reaction tRNA(Pro) + L-proline + ATP = L-prolyl-tRNA(Pro) + AMP + diphosphate. Its function is as follows. Catalyzes the attachment of proline to tRNA(Pro) in a two-step reaction: proline is first activated by ATP to form Pro-AMP and then transferred to the acceptor end of tRNA(Pro). As ProRS can inadvertently accommodate and process non-cognate amino acids such as alanine and cysteine, to avoid such errors it has two additional distinct editing activities against alanine. One activity is designated as 'pretransfer' editing and involves the tRNA(Pro)-independent hydrolysis of activated Ala-AMP. The other activity is designated 'posttransfer' editing and involves deacylation of mischarged Ala-tRNA(Pro). The misacylated Cys-tRNA(Pro) is not edited by ProRS. This is Proline--tRNA ligase from Yersinia enterocolitica serotype O:8 / biotype 1B (strain NCTC 13174 / 8081).